Here is a 243-residue protein sequence, read N- to C-terminus: Orotidine 5'-phosphate decarboxylase (243 aa).

Substrate-binding positions include aspartate 18, lysine 39, aspartate 66–threonine 75, threonine 130, arginine 192, glutamine 201, glycine 221, and arginine 222. The Proton donor role is filled by lysine 68.

The protein belongs to the OMP decarboxylase family. Type 1 subfamily. In terms of assembly, homodimer.

The enzyme catalyses orotidine 5'-phosphate + H(+) = UMP + CO2. The protein operates within pyrimidine metabolism; UMP biosynthesis via de novo pathway; UMP from orotate: step 2/2. Catalyzes the decarboxylation of orotidine 5'-monophosphate (OMP) to uridine 5'-monophosphate (UMP). The polypeptide is Orotidine 5'-phosphate decarboxylase (Synechococcus sp. (strain WH7803)).